The sequence spans 370 residues: DNA primase small subunit PriS (370 aa).

Active-site residues include aspartate 92, aspartate 94, and aspartate 272.

It belongs to the eukaryotic-type primase small subunit family. Heterodimer of a small subunit (PriS) and a large subunit (PriL). It depends on Mg(2+) as a cofactor. The cofactor is Mn(2+).

Functionally, catalytic subunit of DNA primase, an RNA polymerase that catalyzes the synthesis of short RNA molecules used as primers for DNA polymerase during DNA replication. The small subunit contains the primase catalytic core and has DNA synthesis activity on its own. Binding to the large subunit stabilizes and modulates the activity, increasing the rate of DNA synthesis while decreasing the length of the DNA fragments, and conferring RNA synthesis capability. The DNA polymerase activity may enable DNA primase to also catalyze primer extension after primer synthesis. May also play a role in DNA repair. This chain is DNA primase small subunit PriS, found in Picrophilus torridus (strain ATCC 700027 / DSM 9790 / JCM 10055 / NBRC 100828 / KAW 2/3).